Here is a 254-residue protein sequence, read N- to C-terminus: Imidazole glycerol phosphate synthase subunit HisF (254 aa).

Residues Asp11 and Asp130 contribute to the active site.

It belongs to the HisA/HisF family. As to quaternary structure, heterodimer of HisH and HisF.

It localises to the cytoplasm. The catalysed reaction is 5-[(5-phospho-1-deoxy-D-ribulos-1-ylimino)methylamino]-1-(5-phospho-beta-D-ribosyl)imidazole-4-carboxamide + L-glutamine = D-erythro-1-(imidazol-4-yl)glycerol 3-phosphate + 5-amino-1-(5-phospho-beta-D-ribosyl)imidazole-4-carboxamide + L-glutamate + H(+). The protein operates within amino-acid biosynthesis; L-histidine biosynthesis; L-histidine from 5-phospho-alpha-D-ribose 1-diphosphate: step 5/9. In terms of biological role, IGPS catalyzes the conversion of PRFAR and glutamine to IGP, AICAR and glutamate. The HisF subunit catalyzes the cyclization activity that produces IGP and AICAR from PRFAR using the ammonia provided by the HisH subunit. The protein is Imidazole glycerol phosphate synthase subunit HisF of Gloeobacter violaceus (strain ATCC 29082 / PCC 7421).